The following is a 253-amino-acid chain: ABC transporter D-alanine-binding periplasmic protein (253 aa).

Residues 1-22 (MLSKKFGLSMIVLGIMSSSAFA) form the signal peptide. Residues Gly-95, Ser-97, Arg-102, Ala-147, and Glu-191 each contribute to the D-alanine site.

Belongs to the bacterial solute-binding protein 3 family. As to quaternary structure, monomer.

It is found in the periplasm. Functionally, part of the ABC transporter complex dalSTUV, that imports D-alanine into the cytoplasm. Helps protect the organism from oxidative killing by host neutrophils through sequestration of D-alanine, a substrate that is converted to hydrogen peroxide by the host enzyme DAO (D-amino acid oxidase). DalS shuttles D-alanine from the periplasm to the DalTUV complex situated in the inner membrane and through hydrolysis of ATP, D-alanine is transported across the membrane into the cytoplasm. Not required for the metabolism of D-alanine found in the stem peptide of peptidoglycan. In Salmonella typhimurium (strain LT2 / SGSC1412 / ATCC 700720), this protein is ABC transporter D-alanine-binding periplasmic protein.